The primary structure comprises 627 residues: Putative polyketide hydroxylase (627 aa).

FAD is bound by residues 22–51 and 309–319; these read PVLV…LVER and YRSGRVLLAGD. Positions 370–469 are disordered; the sequence is AEATSARAAH…GGGPGGGGPQ (100 aa). Residues 395 to 469 show a composition bias toward gly residues; it reads AGGGGPGAGT…GGGPGGGGPQ (75 aa).

The protein belongs to the PheA/TfdB FAD monooxygenase family. Requires FAD as cofactor.

Involved in developmentally regulated synthesis of a compound biosynthetically related to polyketide antibiotics which is essential for spore color in Streptococcus coelicolor. The protein is Putative polyketide hydroxylase of Streptomyces coelicolor (strain ATCC BAA-471 / A3(2) / M145).